Here is a 382-residue protein sequence, read N- to C-terminus: Protein PEP-RELATED DEVELOPMENT ARRESTED 1 homolog, chloroplastic (382 aa).

Residues Met1–Leu44 constitute a chloroplast transit peptide.

The protein localises to the plastid. Its subcellular location is the chloroplast stroma. It localises to the chloroplast nucleoid. In terms of biological role, plays an essential role in early steps of chloroplast development. May be involved in the redox control of plastid gene expression by maintening the redox state around chloroplast nucleoids. May positively regulate plastid-encoded RNA polymerase (PEP) activity. This chain is Protein PEP-RELATED DEVELOPMENT ARRESTED 1 homolog, chloroplastic, found in Oryza sativa subsp. japonica (Rice).